A 406-amino-acid chain; its full sequence is Probable endo-xylogalacturonan hydrolase A (406 aa).

A signal peptide spans methionine 1–alanine 18. PbH1 repeat units lie at residues threonine 183–alanine 213, serine 214–proline 235, serine 237–serine 257, and valine 299–serine 320. Aspartate 228 acts as the Proton donor in catalysis. Residue histidine 251 is part of the active site. Asparagine 301 carries an N-linked (GlcNAc...) asparagine glycan.

The protein belongs to the glycosyl hydrolase 28 family.

Its subcellular location is the secreted. Pectinolytic enzyme involved in the degradation of xylogalacturonan (xga), a galacturonan backbone heavily substituted with xylose, and which is one important component of the hairy regions of pectin. Activity requires a galacturonic acid backbone substituted with xylose. The polypeptide is Probable endo-xylogalacturonan hydrolase A (xghA) (Aspergillus fumigatus (strain CBS 144.89 / FGSC A1163 / CEA10) (Neosartorya fumigata)).